Reading from the N-terminus, the 210-residue chain is Probable septum site-determining protein MinC (210 aa).

It belongs to the MinC family. In terms of assembly, interacts with MinD and FtsZ.

Functionally, cell division inhibitor that blocks the formation of polar Z ring septums. Rapidly oscillates between the poles of the cell to destabilize FtsZ filaments that have formed before they mature into polar Z rings. Prevents FtsZ polymerization. This Thermotoga sp. (strain RQ2) protein is Probable septum site-determining protein MinC.